A 504-amino-acid chain; its full sequence is Glucosaminyl-phosphatidylinositol-acyltransferase PIGW (504 aa).

Residues 1–21 (MSEKQMKEAFVSNLNGTTVLE) lie on the Lumenal side of the membrane. Asn-15 is a glycosylation site (N-linked (GlcNAc...) asparagine). The chain crosses the membrane as a helical span at residues 22-42 (ITQGLCFPAFCILCRGFLIIF). At 43 to 56 (SQYLCSFSPTWKTR) the chain is on the cytoplasmic side. A helical membrane pass occupies residues 57-75 (FLTDFVVLIVPMVATLTIW). The Lumenal segment spans residues 76–81 (ASFILL). The chain crosses the membrane as a helical span at residues 82–98 (ELLGVIIFGAGLLYQIY). Over 99-131 (RRRTCYARLPFLKILEKFLNISLESEYNPAISC) the chain is Cytoplasmic. A helical transmembrane segment spans residues 132–152 (FRVITSAFTAIAILAVDFPLF). Residues 153 to 162 (PRRFAKTELY) are Lumenal-facing. The helical transmembrane segment at 163–183 (GTGAMDFGVGGFVFGSAMVCL) threads the bilayer. Over 184-202 (EVRRRKYMEGSKLHYFTNS) the chain is Cytoplasmic. Residues 203 to 223 (LYSVWPLVFLGIGRLAIIKSI) form a helical membrane-spanning segment. At 224 to 237 (GYQEHLTEYGVHWN) the chain is on the lumenal side. A helical transmembrane segment spans residues 238–258 (FFFTIIVVKLITPLLLIIFPL). Over 259–260 (NK) the chain is Cytoplasmic. Residues 261-281 (SWIIALGITVLYQLALDFTSL) traverse the membrane as a helical segment. Residues 282–305 (KRLILYGTDGSGTRVGLLNANREG) are Lumenal-facing. The helical transmembrane segment at 306 to 326 (IISTLGYVAIHMAGVQTGLYM) threads the bilayer. Residues 327 to 338 (HKNRSHIKDLIK) are Cytoplasmic-facing. A helical transmembrane segment spans residues 339 to 359 (VACFLLLAAISLFISLYVVQV). Topologically, residues 360–370 (NVEAVSRRMAN) are lumenal. The chain crosses the membrane as a helical span at residues 371–391 (LAFCIWIVASSLILLSSLLLG). Topologically, residues 392–448 (DIILSFAKFLIKGALVPCSWKLIQSPVTNKKHSESLVPEAERMEPSLCLITALNRKQ) are cytoplasmic. Ser-416 bears the Phosphoserine mark. The chain crosses the membrane as a helical span at residues 449-469 (LIFFLLSNITTGLINLMVDTL). The Lumenal segment spans residues 470–473 (HSST). The chain crosses the membrane as a helical span at residues 474–494 (LWALFVVNLYMFSNCLIVYVL). Residues 495 to 504 (YLQDKTVQFW) are Cytoplasmic-facing.

Belongs to the PIGW family.

It is found in the endoplasmic reticulum membrane. The protein operates within glycolipid biosynthesis; glycosylphosphatidylinositol-anchor biosynthesis. Acyltransferase that catalyzes the acyl transfer from an acyl-CoA at the 2-OH position of the inositol ring of glucosaminyl phosphatidylinositol (GlcN-PI) to generate glucosaminyl acyl phosphatidylinositol (GlcN-(acyl)PI) and participates in the fourth step of GPI-anchor biosynthesis. Required for the transport of GPI-anchored proteins to the plasma membrane. Acetylation during GPI-anchor biosynthesis is not essential for the subsequent mannosylation and is usually removed soon after the attachment of GPIs to proteins. This is Glucosaminyl-phosphatidylinositol-acyltransferase PIGW from Homo sapiens (Human).